The following is a 205-amino-acid chain: Ribonuclease HII (205 aa).

Residues 16–205 (VSEVGIDEVG…KSFLKKSNLF (190 aa)) form the RNase H type-2 domain. Residues D22, E23, and D118 each contribute to the a divalent metal cation site.

This sequence belongs to the RNase HII family. It depends on Mn(2+) as a cofactor. Mg(2+) serves as cofactor.

It localises to the cytoplasm. The catalysed reaction is Endonucleolytic cleavage to 5'-phosphomonoester.. Endonuclease that specifically degrades the RNA of RNA-DNA hybrids. This chain is Ribonuclease HII, found in Prochlorococcus marinus (strain MIT 9215).